The chain runs to 1040 residues: Multidrug resistance protein MdtB (1040 aa).

Transmembrane regions (helical) follow at residues 16–36 (FIMR…AGII), 347–367 (LMMA…NIPA), 369–389 (IIPG…MVFL), 396–416 (LTLM…IVVI), 440–460 (IGFT…PLLF), 472–492 (FAIT…TLTP), 537–557 (WLTL…WVFI), 863–883 (LGST…VLGI), 888–908 (FIHP…ALLA), 911–931 (IAGS…IGIV), 968–988 (ILMT…STGV), and 998–1018 (IGMV…TPVI).

This sequence belongs to the resistance-nodulation-cell division (RND) (TC 2.A.6) family. MdtB subfamily. As to quaternary structure, part of a tripartite efflux system composed of MdtA, MdtB and MdtC. MdtB forms a heteromultimer with MdtC.

It is found in the cell inner membrane. Its function is as follows. The MdtABC tripartite complex confers resistance against novobiocin and deoxycholate. In Escherichia coli (strain SE11), this protein is Multidrug resistance protein MdtB.